The primary structure comprises 475 residues: MTAPQVPIAAIATAPGRGGIGVVRVSGPDVGPVMRSVCGQALKPRHATYLPFLDGHGKVIDHGLALYFPAPNSYTGEEVLELQGHGGPVVMQMLLTRCLQAGDGIGLRLAEPGEFTRRAFLNDKLDLAQAEAVADLIEASTEAAARSAARSMEGEFSNAIRQLVDKVIHLRMLVEATLDFPEEEIDFLEQSDARGQLATIRTELSGVLAQARQGALLREGLSVVLAGQPNVGKSSLLNALAGAELAIVTPIAGTTRDRVRETIQIDGIPLHIIDTAGLREHAADEVERIGIERTWDAIRRADIVLHLVDATDYLRHGLSETDDAIDDQLSGQLPPGSPIVRIVNKIDKAPAVGDVVFGGNRPHVVAANGPNPTEIWISARTGAGIELLRRELLRLVGWQSGNEGNFLARERHLTALRNAQSHLDIAAEQAEHQAQALDLFAEELRLAQDCLNSITGEFTSDDLLGTIFTRFCIGK.

Residues R24, E81, and K124 each coordinate (6S)-5-formyl-5,6,7,8-tetrahydrofolate. The TrmE-type G domain occupies 220 to 397 (GLSVVLAGQP…LRRELLRLVG (178 aa)). N230 lines the K(+) pocket. GTP-binding positions include 230–235 (NVGKSS), 249–255 (TPIAGTT), 274–277 (DTAG), and 378–380 (SAR). S234 lines the Mg(2+) pocket. 3 residues coordinate K(+): T249, I251, and T254. Mg(2+) is bound at residue T255. Residue K475 coordinates (6S)-5-formyl-5,6,7,8-tetrahydrofolate.

It belongs to the TRAFAC class TrmE-Era-EngA-EngB-Septin-like GTPase superfamily. TrmE GTPase family. Homodimer. Heterotetramer of two MnmE and two MnmG subunits. The cofactor is K(+).

It localises to the cytoplasm. Exhibits a very high intrinsic GTPase hydrolysis rate. Involved in the addition of a carboxymethylaminomethyl (cmnm) group at the wobble position (U34) of certain tRNAs, forming tRNA-cmnm(5)s(2)U34. In Cupriavidus necator (strain ATCC 17699 / DSM 428 / KCTC 22496 / NCIMB 10442 / H16 / Stanier 337) (Ralstonia eutropha), this protein is tRNA modification GTPase MnmE.